The chain runs to 288 residues: Probable syndecan (288 aa).

The first 26 residues, 1 to 26 (MILKLNFCLSTYSVLILLSLSTQAFA), serve as a signal peptide directing secretion. Residues 27–231 (ANQAKTKVVP…ETLANGFYAA (205 aa)) are Extracellular-facing. The segment at 67-175 (EVNGSGYPTD…NIHNDEDFFT (109 aa)) is disordered. N-linked (GlcNAc...) asparagine glycosylation occurs at N69. S71 and S86 each carry an O-linked (Xyl...) (glycosaminoglycan) serine glycan. Positions 89 to 104 (PPSSATTKSDKVTSPS) are enriched in polar residues. The span at 106-124 (AVVTAKPTTVPTTTASFKP) shows a compositional bias: low complexity. Residues 141–164 (VEEDEDDDEDEDEDDEDDEEDFAD) show a composition bias toward acidic residues. O-linked (Xyl...) (glycosaminoglycan) serine glycosylation is present at S214. Residues 232-252 (IAGGVLVAVITAILLVLFVVF) form a helical membrane-spanning segment. The Cytoplasmic portion of the chain corresponds to 253–288 (RIRKKDEGSYALDEPKQARPYASYGYTKASTKEFYA).

The protein belongs to the syndecan proteoglycan family.

The protein resides in the membrane. It localises to the cell surface. Its subcellular location is the cell junction. It is found in the cytoplasm. In terms of biological role, cell surface proteoglycan that bears heparan sulfate. Required for correct mitotic spindle orientation of the ABar blastomere division plane and this may be through modulation of astral microtubule array, and in association with the wnt-signaling proteins mig-5 and dsh-2. Involved in the migration of AQR and PQR neurons, which descend from the Q neuroblasts. Promotes the axon guidance of D-type motor neurons. The protein is Probable syndecan of Caenorhabditis elegans.